The primary structure comprises 397 residues: Nuclear egress protein 2 (397 aa).

At 1–358 the chain is on the perinuclear space side; the sequence is MEMNKVLHQD…GPSRPQSGPW (358 aa). Disordered stretches follow at residues 205–245 and 291–332; these read RTAG…PPPP and AAAG…PSLE. Residue Ser216 is modified to Phosphoserine. 2 stretches are compositionally biased toward low complexity: residues 224-239 and 291-301; these read PSCS…AAAG and AAAGQDVGGSA. Over residues 310–322 the composition is skewed to basic residues; that stretch reads SRRRGVSTHHRHP. A helical membrane pass occupies residues 359–381; sequence LPARFATLGPLVLALLLVLALLW. Residues 382 to 397 are Nuclear-facing; it reads RGHGQSSSPTRSAHRD.

It belongs to the herpesviridae NEC2 protein family. As to quaternary structure, forms a heterohexameric complex with NEC1. Interacts with host UBA7 and RNF170; this interaction promotes UBA7 proteasomal degradation. In terms of processing, phosphorylated. Phosphorylation by viral kinase UL97 at Ser-216 plays an important role for correct viral nuclear egress complex (NEC) localization.

It localises to the host nucleus inner membrane. Its function is as follows. Plays an essential role in virion nuclear egress, the first step of virion release from infected cell. Within the host nucleus, NEC1 interacts with the newly formed capsid through the vertexes and directs it to the inner nuclear membrane by associating with NEC2. Induces the budding of the capsid at the inner nuclear membrane as well as its envelopment into the perinuclear space. There, the NEC1/NEC2 complex promotes the fusion of the enveloped capsid with the outer nuclear membrane and the subsequent release of the viral capsid into the cytoplasm where it will reach the secondary budding sites in the host Golgi or trans-Golgi network. Inhibits host ISGylation and subsequent innate antiviral response by targeting host UBA7 for proteasomal degradation. The protein is Nuclear egress protein 2 of Human cytomegalovirus (strain AD169) (HHV-5).